We begin with the raw amino-acid sequence, 262 residues long: uncharacterized protein (262 aa).

The 65-residue stretch at 6-70 folds into the S4 RNA-binding domain; the sequence is LRINQFLAHY…LKNKKFSVLV (65 aa). Catalysis depends on Asp-108, which acts as the Nucleophile.

Belongs to the pseudouridine synthase RsuA family.

The enzyme catalyses a uridine in RNA = a pseudouridine in RNA. This is an uncharacterized protein from Helicobacter pylori (strain J99 / ATCC 700824) (Campylobacter pylori J99).